A 247-amino-acid polypeptide reads, in one-letter code: MSKEPDRLFAQPLAQVPDFAFNEDVVRVFPDMIKRSVPGYPTIVENLGVLAAQFAQPNSVLYDLGSSLGAVTQALRRHVRTDGCRVIAVDNSAAMVERCREYLNGQDSMFQELLPVQVIEGDILALEFQPASVVALNFTLQFIAPEQRLALLGRIRQSLLPGGALILSEKLRFNDDQEHALLTDLHIAFKRANGYSELEIAQKRSAIENVMKPDSLEEHRERLLAAGFSKVVPWFQCLNFASLIALP.

S-adenosyl-L-methionine is bound by residues Tyr40, 65–67 (GSS), 90–91 (DN), 122–123 (DI), Asn137, and Arg204.

The protein belongs to the class I-like SAM-binding methyltransferase superfamily. Cx-SAM synthase family. Homodimer.

The catalysed reaction is prephenate + S-adenosyl-L-methionine = carboxy-S-adenosyl-L-methionine + 3-phenylpyruvate + H2O. Catalyzes the conversion of S-adenosyl-L-methionine (SAM) to carboxy-S-adenosyl-L-methionine (Cx-SAM). In Pseudomonas fluorescens (strain ATCC BAA-477 / NRRL B-23932 / Pf-5), this protein is Carboxy-S-adenosyl-L-methionine synthase.